The primary structure comprises 29 residues: NADP phosphatase 1 (29 aa).

In terms of assembly, homodimer.

The protein resides in the cytoplasm. The chain is NADP phosphatase 1 from Arthrobacter sp. (strain KM).